Consider the following 450-residue polypeptide: Calcium-binding and coiled-coil domain-containing protein 2 (450 aa).

Positions 133-136 (ILVV) match the CLIR motif. The stretch at 135 to 349 (VVTTQSEVEE…RENNRLLSYM (215 aa)) forms a coiled coil. An LIR-like motif is present at residues 203–206 (DCWE). The segment at 371-381 (DPGLVFGNPYS) is interaction with LGALS8. Residues 395–450 (KKCPTCKSDFAADVFDHNLALEQHLQTLSLNCPICDKTFPAKEKQIFEDHVFCHTL) are interaction with MYO6. The segment at 423–448 (SLNCPICDKTFPAKEKQIFEDHVFCH) adopts a UBZ1-type zinc-finger fold. Residues Cys-426, Cys-429, His-444, and His-448 each contribute to the Zn(2+) site.

It belongs to the CALCOCO family. Dimer. Part of a complex consisting of CALCOCO2, TAX1BP1 and MYO6. Interacts with GEMIN4. Interacts with ATG8 family members MAP1LC3A, MAP1LC3B, GABARAP, GABARAPL1 and GABARAPL2. Interacts with ATG8 family member MAP1LC3C. Interacts with LGALS8. Interacts with TOM1; the interaction is indirect and is mediated by MYO6, which acts as a bridge between TOM1 and CALCOCO2. Interacts with AZI2.

It is found in the cytoplasm. The protein resides in the perinuclear region. It localises to the cytoskeleton. The protein localises to the cytoplasmic vesicle. Its subcellular location is the autophagosome membrane. Functionally, xenophagy-specific receptor required for autophagy-mediated intracellular bacteria degradation. Acts as an effector protein of galectin-sensed membrane damage that restricts the proliferation of infecting pathogens upon entry into the cytosol by targeting LGALS8-associated bacteria for autophagy. Initially orchestrates bacteria targeting to autophagosomes and subsequently ensures pathogen degradation by regulating pathogen-containing autophagosome maturation. Bacteria targeting to autophagosomes relies on its interaction with MAP1LC3A, MAP1LC3B and/or GABARAPL2, whereas regulation of pathogen-containing autophagosome maturation requires the interaction with MAP3LC3C. May play a role in ruffle formation and actin cytoskeleton organization and seems to negatively regulate constitutive secretion. The sequence is that of Calcium-binding and coiled-coil domain-containing protein 2 from Bos taurus (Bovine).